We begin with the raw amino-acid sequence, 657 residues long: UvrABC system protein B (657 aa).

Positions 23–414 constitute a Helicase ATP-binding domain; the sequence is KSIKKGNKYQ…KENIFHQIMR (392 aa). 36–43 contributes to the ATP binding site; sequence GVTGSGKT. The Beta-hairpin signature appears at 89–112; it reads YYDYYQPEAYIPRTDVFIEKDSST. The 163-residue stretch at 431 to 593 folds into the Helicase C-terminal domain; that stretch reads QVEILFDEAK…ITPTSVKRHI (163 aa). One can recognise a UVR domain in the interval 622–657; it reads AKLVKELRKQMLEAAKALEFEKAAAIRDEINKLRDL.

Belongs to the UvrB family. In terms of assembly, forms a heterotetramer with UvrA during the search for lesions. Interacts with UvrC in an incision complex.

It is found in the cytoplasm. Its function is as follows. The UvrABC repair system catalyzes the recognition and processing of DNA lesions. A damage recognition complex composed of 2 UvrA and 2 UvrB subunits scans DNA for abnormalities. Upon binding of the UvrA(2)B(2) complex to a putative damaged site, the DNA wraps around one UvrB monomer. DNA wrap is dependent on ATP binding by UvrB and probably causes local melting of the DNA helix, facilitating insertion of UvrB beta-hairpin between the DNA strands. Then UvrB probes one DNA strand for the presence of a lesion. If a lesion is found the UvrA subunits dissociate and the UvrB-DNA preincision complex is formed. This complex is subsequently bound by UvrC and the second UvrB is released. If no lesion is found, the DNA wraps around the other UvrB subunit that will check the other stand for damage. This Campylobacter jejuni subsp. jejuni serotype O:2 (strain ATCC 700819 / NCTC 11168) protein is UvrABC system protein B.